We begin with the raw amino-acid sequence, 441 residues long: MAALILRTLLDNNVFSSSDYIHTIKDPLSTSMVEVSGNPQSCGVSEAFSSPSLKKADVSLTFGSSQEISYAAMSAPLNADTSRIPDEIAPTDVNKTELDLSTNNFGVPLADVVLPSSSSTTLSPSIVSEQQQQQQQQQQQQQQAISSEEIITSKGGIKSGAGELPFSIVYGSAFSKTPEIVSFQQPTQKQINDFLQMKSDATRVVTSDGYIFREIFNPDHDDGFKQALEMYGSSFFEPTEPGKNHLHTLCNRGLYRMMVMEDDKGLVLACAFIVEVHAYKSYHMDYLAVRPGIRGGGLGGKFFKQLTTHLRNEQKYLIITFESEPKLVPWYLRMSCLHLNVVSDQVTYENGETFFWWLLVVPLGKIIDDGSDADTDSDSEHPTSAPSTTAPNYALPLSLTEKQRNRSYILYNESGVSYEFNQQTINEIAQYLLTFMSDAKK.

Low complexity predominate over residues 121–143 (TLSPSIVSEQQQQQQQQQQQQQQ). 2 disordered regions span residues 121-146 (TLSP…QAIS) and 371-392 (SDAD…TAPN). Over residues 382–391 (PTSAPSTTAP) the composition is skewed to polar residues.

This is an uncharacterized protein from Dictyostelium discoideum (Social amoeba).